Reading from the N-terminus, the 260-residue chain is Ribonuclease HII (260 aa).

Residues 71-259 (RRIAGIDEAG…VREVLKASEQ (189 aa)) enclose the RNase H type-2 domain. A divalent metal cation is bound by residues D77, E78, and D169.

It belongs to the RNase HII family. Mn(2+) serves as cofactor. It depends on Mg(2+) as a cofactor.

It localises to the cytoplasm. It carries out the reaction Endonucleolytic cleavage to 5'-phosphomonoester.. Endonuclease that specifically degrades the RNA of RNA-DNA hybrids. The protein is Ribonuclease HII of Geobacillus kaustophilus (strain HTA426).